Reading from the N-terminus, the 307-residue chain is Protein pxr1 (307 aa).

Positions Met1–Lys11 are enriched in basic residues. 2 disordered regions span residues Met1 to Thr25 and Asn144 to Asp234. Over residues Asp15–Thr25 the composition is skewed to polar residues. The 55-residue stretch at Thr25–Lys79 folds into the G-patch domain. 2 stretches are compositionally biased toward basic and acidic residues: residues Leu154–Glu168 and Gly206–Gln221.

It belongs to the PINX1 family.

It is found in the nucleus. It localises to the nucleolus. Functionally, involved in rRNA-processing at A0, A1 and A2 sites and negatively regulates telomerase. The polypeptide is Protein pxr1 (pxr1) (Neosartorya fischeri (strain ATCC 1020 / DSM 3700 / CBS 544.65 / FGSC A1164 / JCM 1740 / NRRL 181 / WB 181) (Aspergillus fischerianus)).